Here is a 372-residue protein sequence, read N- to C-terminus: Fork head domain-containing protein FD4 (372 aa).

The fork-head DNA-binding region spans Gln-12 to Leu-103. Disordered stretches follow at residues Glu-225–Asp-245 and Pro-261–Asp-281.

Expressed in early embryogenesis in 14 symmetrical pairs of segmentally arranged neuroblasts. Also, later in embryogenesis, in a cluster of cells in head region.

It localises to the nucleus. Involved in development during embryogenesis. The chain is Fork head domain-containing protein FD4 (fd96Ca) from Drosophila melanogaster (Fruit fly).